The primary structure comprises 432 residues: Probable protein phosphatase 2C 33 (432 aa).

Residues 27–298 (GGGSERPLVR…DDTTCVVVDI (272 aa)) form the PPM-type phosphatase domain. The Mn(2+) site is built by D74, G75, D250, and D289.

Belongs to the PP2C family. Mg(2+) is required as a cofactor. The cofactor is Mn(2+).

It carries out the reaction O-phospho-L-seryl-[protein] + H2O = L-seryl-[protein] + phosphate. The catalysed reaction is O-phospho-L-threonyl-[protein] + H2O = L-threonyl-[protein] + phosphate. This is Probable protein phosphatase 2C 33 from Oryza sativa subsp. japonica (Rice).